The primary structure comprises 65 residues: Large ribosomal subunit protein bL33m (65 aa).

Residues 1–8 (MFLSAVTF) constitute a mitochondrion transit peptide.

This sequence belongs to the bacterial ribosomal protein bL33 family. In terms of assembly, component of the mitochondrial ribosome large subunit (39S) which comprises a 16S rRNA and about 50 distinct proteins.

The protein localises to the mitochondrion. This chain is Large ribosomal subunit protein bL33m (MRPL33), found in Bos taurus (Bovine).